The chain runs to 380 residues: Chorismate synthase (380 aa).

Arginine 49 lines the NADP(+) pocket. FMN is bound by residues glycine 288, 303-307 (KPPSS), and arginine 330.

It belongs to the chorismate synthase family. The cofactor is FMNH2.

It catalyses the reaction 5-O-(1-carboxyvinyl)-3-phosphoshikimate = chorismate + phosphate. It participates in metabolic intermediate biosynthesis; chorismate biosynthesis; chorismate from D-erythrose 4-phosphate and phosphoenolpyruvate: step 7/7. Catalyzes the anti-1,4-elimination of the C-3 phosphate and the C-6 proR hydrogen from 5-enolpyruvylshikimate-3-phosphate (EPSP) to yield chorismate, which is the branch point compound that serves as the starting substrate for the three terminal pathways of aromatic amino acid biosynthesis. This reaction introduces a second double bond into the aromatic ring system. The chain is Chorismate synthase from Aeropyrum pernix (strain ATCC 700893 / DSM 11879 / JCM 9820 / NBRC 100138 / K1).